We begin with the raw amino-acid sequence, 408 residues long: PTI1-like tyrosine-protein kinase 3 (408 aa).

Residues 59–76 (SSENEHLRSPKHHNDFGH) show a composition bias toward basic and acidic residues. The tract at residues 59–91 (SSENEHLRSPKHHNDFGHHTRKPQAAVKPDALK) is disordered. In terms of domain architecture, Protein kinase spans 113-395 (FGSKSLIGEG…IVVKALQPLL (283 aa)). ATP contacts are provided by residues 119–127 (IGEGSYGRA) and K141. The active-site Proton acceptor is D245.

The protein belongs to the protein kinase superfamily. Tyr protein kinase family. In terms of assembly, interacts with OXI1. Phosphorylated by OXI1.

It localises to the cell membrane. The catalysed reaction is L-tyrosyl-[protein] + ATP = O-phospho-L-tyrosyl-[protein] + ADP + H(+). This chain is PTI1-like tyrosine-protein kinase 3 (PTI13), found in Arabidopsis thaliana (Mouse-ear cress).